Reading from the N-terminus, the 632-residue chain is ATP-dependent DNA helicase RecQ (632 aa).

The 169-residue stretch at 47–215 folds into the Helicase ATP-binding domain; it reads IDATLMGKDS…LRHLNLQSPH (169 aa). 60–67 is a binding site for ATP; it reads MATGNGKS. The DEAH box motif lies at 159 to 162; it reads DEAH. The region spanning 236–385 is the Helicase C-terminal domain; it reads PMEQLCRFVL…IEALKLQAIG (150 aa). Cys-393, Cys-410, Cys-413, and Cys-416 together coordinate Zn(2+). The HRDC domain maps to 544-624; it reads AQYDKDLFAR…QQHKKVLTQH (81 aa).

This sequence belongs to the helicase family. RecQ subfamily. Requires Mg(2+) as cofactor. It depends on Zn(2+) as a cofactor.

It catalyses the reaction Couples ATP hydrolysis with the unwinding of duplex DNA by translocating in the 3'-5' direction.. It carries out the reaction ATP + H2O = ADP + phosphate + H(+). An ATP-dependent DNA helicase which unwinds DNA in a 3'-5' direction. Plays a role in recombination. This is ATP-dependent DNA helicase RecQ from Pasteurella multocida (strain Pm70).